The chain runs to 281 residues: Pantothenate synthetase (281 aa).

Residue 30–37 (MGNLHQGH) coordinates ATP. The active-site Proton donor is H37. Residue Q61 participates in (R)-pantoate binding. Q61 lines the beta-alanine pocket. Residue 149 to 152 (GRKD) coordinates ATP. Residue Q155 coordinates (R)-pantoate. Residues I178 and 186–189 (MSSR) each bind ATP.

Belongs to the pantothenate synthetase family. As to quaternary structure, homodimer.

The protein localises to the cytoplasm. The catalysed reaction is (R)-pantoate + beta-alanine + ATP = (R)-pantothenate + AMP + diphosphate + H(+). It functions in the pathway cofactor biosynthesis; (R)-pantothenate biosynthesis; (R)-pantothenate from (R)-pantoate and beta-alanine: step 1/1. Functionally, catalyzes the condensation of pantoate with beta-alanine in an ATP-dependent reaction via a pantoyl-adenylate intermediate. This chain is Pantothenate synthetase, found in Shewanella denitrificans (strain OS217 / ATCC BAA-1090 / DSM 15013).